A 122-amino-acid polypeptide reads, in one-letter code: Large ribosomal subunit protein uL14 (122 aa).

The protein belongs to the universal ribosomal protein uL14 family. As to quaternary structure, part of the 50S ribosomal subunit. Forms a cluster with proteins L3 and L19. In the 70S ribosome, L14 and L19 interact and together make contacts with the 16S rRNA in bridges B5 and B8.

Binds to 23S rRNA. Forms part of two intersubunit bridges in the 70S ribosome. This chain is Large ribosomal subunit protein uL14, found in Rhizobium etli (strain CIAT 652).